Consider the following 351-residue polypeptide: Modulator of apoptosis 1 (351 aa).

Positions 49–52 (YRLL) match the LIR motif. Residues 120 to 127 (LSRALGHE) are BH3-like. The interval 202–205 (KRRR) is RASSF1-binding.

It belongs to the PNMA family. Homodimer. Under normal circumstances, held in an inactive conformation by an intramolecular interaction. Interacts with BAX. Binding to RASSF1 isoform A (RASSF1A) relieves this inhibitory interaction and allows further binding to BAX. Also binds to BCL2 and BCLX. Recruited to the TNFRSF1A and TNFRSF10A complexes in response to their respective cognate ligand, after internalization. Interacts with TRIM39. Interacts with RASSF6. Interacts with ATG8 proteins MAP1LC3A, MAP1LC3B and MAP1LC3C. Does not interact with ATG8 proteins GABARAPL1, GABARAPL2 and GABARAP. Interacts with SQSTM1; promoting dissociation of SQSTM1 inclusion bodies that sequester KEAP1. In terms of processing, ubiquitinated and degraded during mitotic exit by APC/C-Cdh1, this modification is inhibited by TRIM39. Widely expressed, with high levels in heart and brain.

It localises to the cytoplasm. Its subcellular location is the cytosol. It is found in the mitochondrion outer membrane. The protein resides in the extracellular vesicle membrane. Retrotransposon-derived protein that forms virion-like capsids. Acts as an effector of BAX during apoptosis: enriched at outer mitochondria membrane and associates with BAX upon induction of apoptosis, facilitating BAX-dependent mitochondrial outer membrane permeabilization and apoptosis. Required for death receptor-dependent apoptosis. When associated with RASSF1, promotes BAX conformational change and translocation to mitochondrial membranes in response to TNF and TNFSF10 stimulation. Also promotes autophagy: promotes phagophore closure via association with ATG8 proteins. Acts as an inhibitor of the NFE2L2/NRF2 pathway via interaction with SQSTM1: interaction promotes dissociation of SQSTM1 inclusion bodies that sequester KEAP1, relieving inactivation of the BCR(KEAP1) complex. The polypeptide is Modulator of apoptosis 1 (Homo sapiens (Human)).